Consider the following 242-residue polypeptide: uncharacterized protein (242 aa).

The next 3 helical transmembrane spans lie at 75-95 (YAIF…HNFY), 116-136 (IVLI…FSLI), and 176-196 (IQGL…LEVI). The segment at 204–242 (DVEMSSMRGQAITTEPASDNTMAEGTDCNTSKDVESGSS) is disordered. Residues 210–232 (MRGQAITTEPASDNTMAEGTDCN) are compositionally biased toward polar residues. Over residues 233-242 (TSKDVESGSS) the composition is skewed to basic and acidic residues.

The protein resides in the cytoplasm. It is found in the membrane. This is an uncharacterized protein from Schizosaccharomyces pombe (strain 972 / ATCC 24843) (Fission yeast).